Consider the following 762-residue polypeptide: Protein PHTF1 (762 aa).

The PHTF domain occupies 6–150 (RDAISWYQKK…VHCQIVSTQI (145 aa)). 3 helical membrane passes run 77–97 (GLVR…VTSL), 99–119 (IFVW…LYLM), and 121–141 (PIVN…MGTV). Residues 152-184 (RPSGNNGNRRRRKLRKTVNGDGSRENGNNSSDK) form a disordered region. N-linked (GlcNAc...) asparagine glycans are attached at residues asparagine 179 and asparagine 180. Residues serine 272, serine 276, serine 277, serine 334, and serine 336 each carry the phosphoserine modification. Disordered stretches follow at residues 344–380 (SAAF…ETED) and 393–415 (RSSV…TKRD). Over residues 348-361 (SQGSRSGVSGGSRS) the composition is skewed to low complexity. A glycan (N-linked (GlcNAc...) asparagine) is linked at asparagine 363. Residues 365-376 (SRRDSESTRHDS) are compositionally biased toward basic and acidic residues. An N-linked (GlcNAc...) asparagine glycan is attached at asparagine 431. 4 helical membrane passes run 473–493 (GVGY…FPFL), 512–532 (EILT…LSII), 611–631 (VVVS…CAQV), and 645–665 (WEFL…ASLG). N-linked (GlcNAc...) asparagine glycans are attached at residues asparagine 674 and asparagine 733. The chain crosses the membrane as a helical span at residues 737 to 757 (VVILSAVSGVISDLLGFNIRL).

In terms of assembly, interacts with FEM1B. Widely expressed with highest levels in testis.

The protein localises to the endoplasmic reticulum membrane. It is found in the golgi apparatus. Its subcellular location is the cis-Golgi network membrane. This chain is Protein PHTF1, found in Homo sapiens (Human).